A 507-amino-acid chain; its full sequence is Branchpoint-bridging protein (507 aa).

Residues 84–93 (DLNPPTSRYR) are compositionally biased toward polar residues. The segment at 84–110 (DLNPPTSRYRSLSPPPVYDSQGKRTNT) is disordered. One can recognise a KH domain in the interval 154–220 (YIPINDYPEI…NMNEPLHCVI (67 aa)). 2 CCHC-type zinc fingers span residues 272–289 (RPCPLCGEQGHKKWECSS) and 297–314 (VICQRCNQPGHAARDCTS). The interval 307-507 (HAARDCTSPL…PPPPPPPPSS (201 aa)) is disordered. Basic and acidic residues predominate over residues 319–336 (FGKRTSDGPEFRETKKLQ). Over residues 345–376 (PVGSHPSAPGSGSANSGVAPASLHPPGTMAPP) the composition is skewed to low complexity. Pro residues-rich tracts occupy residues 390 to 412 (TLPPPAALPAPAAPGTLPPPVAL) and 440 to 449 (EGPPAPPQTA). The span at 450–469 (PPLRQTAATASSAGSSQSAQ) shows a compositional bias: low complexity. Over residues 484–507 (PGPPAAVLPPPPPPPPPPPPPPSS) the composition is skewed to pro residues.

Belongs to the BBP/SF1 family.

It is found in the nucleus. Functionally, necessary for the splicing of pre-mRNA. Has a role in the recognition of the branch site (5'-UACUAAC-3'), the pyrimidine tract and the 3'-splice site at the 3'-end of introns. This chain is Branchpoint-bridging protein (BBP), found in Eremothecium gossypii (strain ATCC 10895 / CBS 109.51 / FGSC 9923 / NRRL Y-1056) (Yeast).